Reading from the N-terminus, the 129-residue chain is Small ribosomal subunit protein uS11 (129 aa).

The protein belongs to the universal ribosomal protein uS11 family. As to quaternary structure, part of the 30S ribosomal subunit. Interacts with proteins S7 and S18. Binds to IF-3.

Located on the platform of the 30S subunit, it bridges several disparate RNA helices of the 16S rRNA. Forms part of the Shine-Dalgarno cleft in the 70S ribosome. The polypeptide is Small ribosomal subunit protein uS11 (Bacillus mycoides (strain KBAB4) (Bacillus weihenstephanensis)).